The chain runs to 522 residues: Sorting nexin-1 (522 aa).

Disordered stretches follow at residues Met1–Glu84 and Ser115–Gln142. Phosphoserine occurs at positions 32 and 39. Acidic residues predominate over residues Glu35–Asp45. A phosphothreonine mark is found at Thr41 and Thr48. Positions Lys55 to Lys73 are enriched in polar residues. A phosphoserine mark is found at Ser58 and Ser72. A compositionally biased stretch (acidic residues) spans Glu132–Gln142. The 130-residue stretch at Phe143–Arg272 folds into the PX domain. A 1,2-diacyl-sn-glycero-3-phospho-(1D-myo-inositol-3-phosphate) contacts are provided by Arg186, Ser188, and Lys214. Ser188 carries the post-translational modification Phosphoserine. Lys237 carries the post-translational modification N6-acetyllysine. Position 238 (Arg238) interacts with a 1,2-diacyl-sn-glycero-3-phospho-(1D-myo-inositol-3-phosphate). Ser280 carries the post-translational modification Phosphoserine. Residues Gly281 to Met298 are membrane-binding amphipathic helix. The region spanning Met302–Ser522 is the BAR domain.

This sequence belongs to the sorting nexin family. As to quaternary structure, predominantly forms heterodimers with BAR domain-containing sorting nexins SNX5, SNX6 and SNX32; can self-associate to form homodimers. The heterodimers are proposed to self-assemble into helical arrays on the membrane to stabilize and expand local membrane curvature underlying endosomal tubule formation. Thought to be a component of the originally described retromer complex (also called SNX-BAR retromer) which is a pentamer containing the heterotrimeric retromer cargo-selective complex (CSC), also described as vacuolar protein sorting subcomplex (VPS) and a heterodimeric membrane-deforming subcomplex formed between SNX1 or SNX2 and SNX5 or SNX6 (also called SNX-BAR subcomplex); the respective CSC and SNX-BAR subcomplexes associate with low affinity. Interacts with SNX5, SNX6, SNX32, VPS26A, VPS29, VPS35, DRD5, DENND5A, KALRN, RHOG (GDP-bound form). The interaction with SNX2 is reported controversially. Interacts with DNAJC13; prevented by presence of HGS. Interacts with HGS.

It is found in the endosome membrane. It localises to the golgi apparatus. The protein localises to the trans-Golgi network membrane. Its subcellular location is the early endosome membrane. The protein resides in the cell projection. It is found in the lamellipodium. Its function is as follows. Involved in several stages of intracellular trafficking. Interacts with membranes containing phosphatidylinositol 3-phosphate (PtdIns(3P)) or phosphatidylinositol 3,5-bisphosphate (PtdIns(3,5)P2). Acts in part as component of the retromer membrane-deforming SNX-BAR subcomplex. The SNX-BAR retromer mediates retrograde transport of cargo proteins from endosomes to the trans-Golgi network (TGN) and is involved in endosome-to-plasma membrane transport for cargo protein recycling. The SNX-BAR subcomplex functions to deform the donor membrane into a tubular profile called endosome-to-TGN transport carrier (ETC). Can sense membrane curvature and has in vitro vesicle-to-membrane remodeling activity. Involved in retrograde endosome-to-TGN transport of lysosomal enzyme receptors (IGF2R, M6PR and SORT1) and Shiginella dysenteria toxin stxB. Plays a role in targeting ligand-activated EGFR to the lysosomes for degradation after endocytosis from the cell surface and release from the Golgi. Involvement in retromer-independent endocytic trafficking of P2RY1 and lysosomal degradation of protease-activated receptor-1/F2R. Promotes KALRN- and RHOG-dependent but retromer-independent membrane remodeling such as lamellipodium formation; the function is dependent on GEF activity of KALRN. Required for endocytosis of DRD5 upon agonist stimulation but not for basal receptor trafficking. In Homo sapiens (Human), this protein is Sorting nexin-1 (SNX1).